Here is a 401-residue protein sequence, read N- to C-terminus: Probable plasmid-partitioning protein ParB (401 aa).

The tract at residues 232-272 (KTRGKENARDKAAAVKEEVKPSKKPKADNGEKTPKGRSHEE) is disordered.

Belongs to the ParB family.

The sequence is that of Probable plasmid-partitioning protein ParB from Xylella fastidiosa (strain 9a5c).